The following is a 1288-amino-acid chain: SH3 domain and tetratricopeptide repeat-containing protein 2 (1288 aa).

SH3 domains are found at residues 176–240 and 268–331; these read EGHF…PLPL and IGRG…PDSY. Residues 386–395 are compositionally biased toward polar residues; sequence NPPNDLSASQ. 2 disordered regions span residues 386–405 and 410–444; these read NPPN…VRPG and EHQA…LPEP. 8 TPR repeats span residues 528–561, 757–790, 836–869, 1001–1037, 1084–1118, 1119–1152, 1166–1199, and 1210–1244; these read ARLC…LNGA, RALC…GQLL, GVIY…AQEV, GRLL…FIDL, LKLY…LARR, LKAV…ATLA, LVAF…CPPW, and AKVY…AVLL.

As to expression, strongly expressed in brain and spinal cord. Expressed at equal level in spinal cord and sciatic nerve. Weakly expressed in striated muscle.

The polypeptide is SH3 domain and tetratricopeptide repeat-containing protein 2 (SH3TC2) (Homo sapiens (Human)).